Here is an 854-residue protein sequence, read N- to C-terminus: Protein mono-ADP-ribosyltransferase PARP8 (854 aa).

Disordered regions lie at residues N113–Y138 and S291–G310. The segment covering V123–E135 has biased composition (acidic residues). An ADP-ribosylcysteine mark is found at C332, C367, C376, and C395. Residues E617 to L844 form the PARP catalytic domain. Residues Q750–S777 are disordered. Over residues S760–S777 the composition is skewed to low complexity.

This sequence belongs to the ARTD/PARP family. In terms of processing, auto-mono-ADP-ribosylated.

The catalysed reaction is L-cysteinyl-[protein] + NAD(+) = S-(ADP-D-ribosyl)-L-cysteinyl-[protein] + nicotinamide + H(+). Its function is as follows. Mono-ADP-ribosyltransferase that mediates mono-ADP-ribosylation of target proteins. The polypeptide is Protein mono-ADP-ribosyltransferase PARP8 (Homo sapiens (Human)).